A 706-amino-acid polypeptide reads, in one-letter code: MSKYEVLQGFYAVHDELGSGGFGKVRLATHLLTNQKVAIKIIDKKQLGHDLPRVQTEMDALRNLSHQNICRLYHYIETEDKFFIVMEYCSGGEMFDYIVRKERLEESEARHFFRQLVSAIAFVHSQGYAHRDLKPENLLLTEDLHLKLIDFGLCAKTEKGRIDKHNLDTCCGSPAYAAPELIQGLQYKGNEADVWSMGILLYTLLVGALPFEDDNMQIMYKKIQSGCFYEPEFLSPLSKQLLRAMLQVVPERRISVKKLLEHDWLNHKYTQPVKWNTIYDKNFIDRDVARVMSKYYGFESTDKMIEKIKEWNFDYMTSTYYALLHRKRNGMEIILPMVRNSTNTAPPNVQNILCSPTIHASLENNLDKSGLEDDDSDPSSISSSSDISARLKKNCVVSDESSSSRFVKPMSPAAEKDKKMSYVNAMLTMPSQFTGRSPLRIPESPMSVRSSDSASLGSAATPSRGGVKDNDKENASTGKNYRMGASTCKSRGPLKITGVEEGTMKSVYTTPNTRPTLRGLFSPGNAEHKKRQRARSSDRASIGMPPGSPVSIGSAHSANNELLADGRTPRSRIKTNRLPQRVFTSLERKKEKLITLLTPRKMQRDSPQVLKDVKNMVNVSMTASQDPEEVRNLLKKVFDDERMRYELNGWKFLATQETVHGWMTVELEIVRLQMFDKVGIRRKRLKGDAFMYKKVCEKILQMAKIE.

Residues 11–265 (YAVHDELGSG…VKKLLEHDWL (255 aa)) enclose the Protein kinase domain. ATP-binding positions include 17-25 (LGSGGFGKV) and lysine 40. The active-site Proton acceptor is aspartate 132. Disordered stretches follow at residues 366–386 (LDKS…SSSD), 433–493 (FTGR…SRGP), and 506–555 (SVYT…IGSA). Polar residues-rich tracts occupy residues 447-461 (SVRS…SAAT) and 506-515 (SVYTTPNTRP). Positions 656–705 (QETVHGWMTVELEIVRLQMFDKVGIRRKRLKGDAFMYKKVCEKILQMAKI) constitute a KA1 domain.

The protein belongs to the protein kinase superfamily. CAMK Ser/Thr protein kinase family. SNF1 subfamily. Post-translationally, may be phosphorylated at Thr-169 by par-4 and/or autophosphorylated which likely results in its activation. Phosphorylation is not required for co-localization with the centrosome.

It localises to the cytoplasm. Its subcellular location is the cytoskeleton. It is found in the microtubule organizing center. The protein resides in the centrosome. The catalysed reaction is L-seryl-[protein] + ATP = O-phospho-L-seryl-[protein] + ADP + H(+). It carries out the reaction L-threonyl-[protein] + ATP = O-phospho-L-threonyl-[protein] + ADP + H(+). Its function is as follows. Serine/threonine-protein kinase involved in cell autonomous neuroblast asymmetric divisions that generate one precursor cell and one apoptotic cell by controlling spindle positioning, myosin distribution and the segregation of cell fate determinants. Plays a role in neural fate specification in several dopaminergic linages, acting in concert with ham-1. Involved in phosphorylation of multiple proteins associated with key developmental processes, including the cell cycle, apoptosis, endocytosis, and asymmetric cell division. Promotes cell shedding during embryogenesis, probably through the endocytosis-mediated removal of cell adhesion molecules such as hmp-1 from the cell surface. May act downstream of par-4/strd-1/mop-25 to regulate cell shedding. This Caenorhabditis elegans protein is Maternal embryonic leucine zipper kinase.